A 150-amino-acid chain; its full sequence is Cell division protein SepF (150 aa).

Belongs to the SepF family. As to quaternary structure, homodimer. Interacts with FtsZ.

The protein resides in the cytoplasm. Functionally, cell division protein that is part of the divisome complex and is recruited early to the Z-ring. Probably stimulates Z-ring formation, perhaps through the cross-linking of FtsZ protofilaments. Its function overlaps with FtsA. The polypeptide is Cell division protein SepF (Clostridium beijerinckii (strain ATCC 51743 / NCIMB 8052) (Clostridium acetobutylicum)).